We begin with the raw amino-acid sequence, 715 residues long: Polyribonucleotide nucleotidyltransferase (715 aa).

Mg(2+)-binding residues include aspartate 497 and aspartate 503. Residues 564-623 enclose the KH domain; sequence PRLLTMKIDPEQIGLVIGPGGKTIKSITEQTGSKIDIADDGTVTIAAIQAKKAERARDLI. The S1 motif domain occupies 633-701; the sequence is GEVYLGRVTR…NKGRLNLTRL (69 aa).

Belongs to the polyribonucleotide nucleotidyltransferase family. Mg(2+) serves as cofactor.

It is found in the cytoplasm. The enzyme catalyses RNA(n+1) + phosphate = RNA(n) + a ribonucleoside 5'-diphosphate. Involved in mRNA degradation. Catalyzes the phosphorolysis of single-stranded polyribonucleotides processively in the 3'- to 5'-direction. This chain is Polyribonucleotide nucleotidyltransferase, found in Crocosphaera subtropica (strain ATCC 51142 / BH68) (Cyanothece sp. (strain ATCC 51142)).